The chain runs to 181 residues: ATP synthase subunit b (181 aa).

A helical membrane pass occupies residues Leu-24 to Val-44.

This sequence belongs to the ATPase B chain family. F-type ATPases have 2 components, F(1) - the catalytic core - and F(0) - the membrane proton channel. F(1) has five subunits: alpha(3), beta(3), gamma(1), delta(1), epsilon(1). F(0) has three main subunits: a(1), b(2) and c(10-14). The alpha and beta chains form an alternating ring which encloses part of the gamma chain. F(1) is attached to F(0) by a central stalk formed by the gamma and epsilon chains, while a peripheral stalk is formed by the delta and b chains.

The protein localises to the cell membrane. Its function is as follows. F(1)F(0) ATP synthase produces ATP from ADP in the presence of a proton or sodium gradient. F-type ATPases consist of two structural domains, F(1) containing the extramembraneous catalytic core and F(0) containing the membrane proton channel, linked together by a central stalk and a peripheral stalk. During catalysis, ATP synthesis in the catalytic domain of F(1) is coupled via a rotary mechanism of the central stalk subunits to proton translocation. In terms of biological role, component of the F(0) channel, it forms part of the peripheral stalk, linking F(1) to F(0). The protein is ATP synthase subunit b of Mycoplasma capricolum subsp. capricolum (strain California kid / ATCC 27343 / NCTC 10154).